The chain runs to 186 residues: Ribosome-recycling factor (186 aa).

This sequence belongs to the RRF family.

The protein resides in the cytoplasm. Responsible for the release of ribosomes from messenger RNA at the termination of protein biosynthesis. May increase the efficiency of translation by recycling ribosomes from one round of translation to another. In Paraburkholderia xenovorans (strain LB400), this protein is Ribosome-recycling factor.